The sequence spans 654 residues: Threonine--tRNA ligase (654 aa).

The TGS domain occupies methionine 1–alanine 63. Residues aspartate 248–proline 546 form a catalytic region. The Zn(2+) site is built by cysteine 342, histidine 393, and histidine 523.

Belongs to the class-II aminoacyl-tRNA synthetase family. Homodimer. The cofactor is Zn(2+).

It is found in the cytoplasm. The catalysed reaction is tRNA(Thr) + L-threonine + ATP = L-threonyl-tRNA(Thr) + AMP + diphosphate + H(+). Functionally, catalyzes the attachment of threonine to tRNA(Thr) in a two-step reaction: L-threonine is first activated by ATP to form Thr-AMP and then transferred to the acceptor end of tRNA(Thr). Also edits incorrectly charged L-seryl-tRNA(Thr). In Lactiplantibacillus plantarum (strain ATCC BAA-793 / NCIMB 8826 / WCFS1) (Lactobacillus plantarum), this protein is Threonine--tRNA ligase.